A 44-amino-acid chain; its full sequence is Protein PsbN (44 aa).

Residues 7–29 form a helical membrane-spanning segment; that stretch reads VATVFVSCLVLSITGYSLYIGFG.

This sequence belongs to the PsbN family.

It is found in the plastid. The protein localises to the chloroplast thylakoid membrane. May play a role in photosystem I and II biogenesis. This is Protein PsbN from Nephroselmis olivacea (Green alga).